A 393-amino-acid chain; its full sequence is Iripin-5 (393 aa).

The N-terminal stretch at 1–16 is a signal peptide; the sequence is MKTLIVLMCSLVVVWA. N-linked (GlcNAc...) asparagine glycans are attached at residues N198 and N245.

Belongs to the serpin family. In terms of tissue distribution, highly expressed in female salivary gland during blood feeding. Expressed in female midgut and ovary during blood feeding.

Its subcellular location is the secreted. Its function is as follows. Serine protease inhibitor that modulates blood feeding of ticks on vertebrate species. Inhibits host neutrophil elastase (ELANE) and proteinase 3/myeloblastin (PRTN3). Moderately inhibits host chymase, cathepsin G (CTSG), trypsin and alpha-chymotrypsin. Decreases host neutrophil migration. Decreases nitric oxide production by host macrophages. Decreases host complement activity. This is Iripin-5 from Ixodes ricinus (Common tick).